An 84-amino-acid polypeptide reads, in one-letter code: UPF0298 protein NWMN_0985 (84 aa).

This sequence belongs to the UPF0298 family.

It is found in the cytoplasm. The sequence is that of UPF0298 protein NWMN_0985 from Staphylococcus aureus (strain Newman).